Reading from the N-terminus, the 375-residue chain is MNNRDKRVLVGMSGGIDSSATCIMLQEQGYEVVGVTMRTWDVPSRFSTPGQDEPDDVLEARALAERLGIEHHVADVRKEFKQIIVKHFIDEYMQGRTPNPCVLCNPLFKERILCEWADQTNCAHISTGHYCRLEERKGKLYIVAGDDQTKDQSYFLWKLPQEILQRFLFPLGTYTKQEVREYLRQKGFEAKARGGESMEICFIEGDYRNFLRSQCPDIDTQVGPGWFVNSKGVKIGQHKGFPYYTIGQRKGLEIALGHPAYVLRINAEKNTVMLGDAEELKAEYMLVEDYHITEMQDLLQCKDLSVRIRYRSKPIPCQVLVLDEKQLLVRFLSEASAIAPGQSAVFYEGKRVLGGAFIASQRGIRKIAADNQDKF.

ATP contacts are provided by residues 11–18 and M37; that span reads GMSGGIDS. The Nucleophile role is filled by C104. A disulfide bridge connects residues C104 and C201. Residue G128 participates in ATP binding. Residues 150–152 form an interaction with tRNA region; that stretch reads KDQ. The active-site Cysteine persulfide intermediate is the C201. The segment at 309–310 is interaction with tRNA; sequence RY.

It belongs to the MnmA/TRMU family.

It localises to the cytoplasm. It catalyses the reaction S-sulfanyl-L-cysteinyl-[protein] + uridine(34) in tRNA + AH2 + ATP = 2-thiouridine(34) in tRNA + L-cysteinyl-[protein] + A + AMP + diphosphate + H(+). Functionally, catalyzes the 2-thiolation of uridine at the wobble position (U34) of tRNA, leading to the formation of s(2)U34. This is tRNA-specific 2-thiouridylase MnmA 3 from Phocaeicola vulgatus (strain ATCC 8482 / DSM 1447 / JCM 5826 / CCUG 4940 / NBRC 14291 / NCTC 11154) (Bacteroides vulgatus).